The following is a 488-amino-acid chain: Type II restriction enzyme HgaI (488 aa).

The enzyme catalyses Endonucleolytic cleavage of DNA to give specific double-stranded fragments with terminal 5'-phosphates.. In terms of biological role, an S subtype restriction enzyme that recognizes the double-stranded sequences 5'-GACGC-3' and 5'-GCGTC-3' and cleaves respectively 10 bases after G-1 and 10 bases before G'-1. This is Type II restriction enzyme HgaI (hgaIR) from Avibacterium volantium (Pasteurella volantium).